The sequence spans 133 residues: Putative nickel-responsive regulator (133 aa).

Residues His74, His85, His87, and Cys93 each contribute to the Ni(2+) site.

This sequence belongs to the transcriptional regulatory CopG/NikR family. Requires Ni(2+) as cofactor.

Transcriptional regulator. The sequence is that of Putative nickel-responsive regulator from Saccharolobus solfataricus (strain ATCC 35092 / DSM 1617 / JCM 11322 / P2) (Sulfolobus solfataricus).